Reading from the N-terminus, the 451-residue chain is Phosphoglucosamine mutase (451 aa).

Residue serine 103 is the Phosphoserine intermediate of the active site. Mg(2+) contacts are provided by serine 103, aspartate 243, aspartate 245, and aspartate 247. Phosphoserine is present on serine 103.

It belongs to the phosphohexose mutase family. Requires Mg(2+) as cofactor. Post-translationally, activated by phosphorylation.

The catalysed reaction is alpha-D-glucosamine 1-phosphate = D-glucosamine 6-phosphate. In terms of biological role, catalyzes the conversion of glucosamine-6-phosphate to glucosamine-1-phosphate. The protein is Phosphoglucosamine mutase of Lactobacillus johnsonii (strain CNCM I-12250 / La1 / NCC 533).